Consider the following 605-residue polypeptide: Translation factor GUF1 homolog, chloroplastic (605 aa).

Residues Arg7–Arg189 enclose the tr-type G domain. GTP is bound by residues Ala16–Ser23, Asp82–His86, and Asn136–Asp139.

Belongs to the TRAFAC class translation factor GTPase superfamily. Classic translation factor GTPase family. LepA subfamily.

It is found in the plastid. The protein localises to the chloroplast. The enzyme catalyses GTP + H2O = GDP + phosphate + H(+). Functionally, promotes chloroplast protein synthesis. May act as a fidelity factor of the translation reaction, by catalyzing a one-codon backward translocation of tRNAs on improperly translocated ribosomes. This is Translation factor GUF1 homolog, chloroplastic from Ostreococcus lucimarinus (strain CCE9901).